The primary structure comprises 159 residues: MTLSILVAHDLQRVIGFENQLPWHLPNDLKHVKKLSTGHTLVMGRKTFESIGKPLPNRRNVVLTSDTSFNVEGVDVIHSIEDIYQLPGHVFIFGGQTLFEEMIDKVDDMYITVIEGKFRGDTFFPPYTFEDWEVASSVEGKLDEKNTIPHTFLHLIRKK.

The 156-residue stretch at 2–157 (TLSILVAHDL…IPHTFLHLIR (156 aa)) folds into the DHFR domain. 6–8 (LVA) serves as a coordination point for substrate. Residues 7–8 (VA) and 15–20 (IGFENQ) contribute to the NADP(+) site. Asp28 is a binding site for substrate. Position 44–47 (44–47 (GRKT)) interacts with NADP(+). Arg58 serves as a coordination point for substrate. NADP(+) is bound by residues 63–66 (LTSD) and 93–98 (FGGQTL). Thr112 is a binding site for substrate.

The protein belongs to the dihydrofolate reductase family.

It catalyses the reaction (6S)-5,6,7,8-tetrahydrofolate + NADP(+) = 7,8-dihydrofolate + NADPH + H(+). The protein operates within cofactor biosynthesis; tetrahydrofolate biosynthesis; 5,6,7,8-tetrahydrofolate from 7,8-dihydrofolate: step 1/1. In terms of biological role, key enzyme in folate metabolism. Catalyzes an essential reaction for de novo glycine and purine synthesis, and for DNA precursor synthesis. The protein is Dihydrofolate reductase (folA) of Staphylococcus aureus (strain COL).